Here is a 1073-residue protein sequence, read N- to C-terminus: Probable lipase MIL1 (1073 aa).

Disordered stretches follow at residues 1–151 and 163–190; these read MSDS…AVSS and LTSKVRNSEQASETSPTVPPGKNCKSVN. 2 stretches are compositionally biased toward basic and acidic residues: residues 54-81 and 101-121; these read QAKEEVFKRREEDGTRTEDALHEGEAGK and GIDRADKPILLDPFKSVHDTD. Positions 143 to 147 match the APM2-interacting WQEMP motif motif; the sequence is WQEMP. 3 N-linked (GlcNAc...) asparagine glycosylation sites follow: Asn-190, Asn-229, and Asn-236. A disordered region spans residues 230-267; that stretch reads SSQTSVNLTSSPSTTSLNNEKNNDDDDDDSYDEYEDDV. The span at 233–249 shows a compositional bias: low complexity; that stretch reads TSVNLTSSPSTTSLNNE. Positions 252-267 are enriched in acidic residues; sequence NDDDDDDSYDEYEDDV. A glycan (N-linked (GlcNAc...) asparagine) is linked at Asn-280. Residues 292–312 form a helical membrane-spanning segment; sequence FAYVGAINILANQMCTNLATL. A disordered region spans residues 385 to 448; that stretch reads NPWENDRDHE…SDVPGKVLDP (64 aa). Residues 404 to 427 show a composition bias toward polar residues; sequence RMSPNEQNGSVQASTPDPEQSATP. An N-linked (GlcNAc...) asparagine glycan is attached at Asn-411. Ser-435 bears the Phosphoserine mark. A helical transmembrane segment spans residues 457–477; that stretch reads LNIDVAWTIICDLFLICLQSS. Residue Asn-495 is glycosylated (N-linked (GlcNAc...) asparagine). Helical transmembrane passes span 553-573 and 577-597; these read LVLGLSGGLLAPVIGGGIAAG and IGITGATSFLTGVGGTTVVAV. N-linked (GlcNAc...) asparagine glycosylation occurs at Asn-726. Residues 818–838 form a helical membrane-spanning segment; the sequence is WFLAYLFRAAAGGFSAVMGIS. Asn-850 carries an N-linked (GlcNAc...) asparagine glycan. Disordered regions lie at residues 942 to 968 and 1010 to 1073; these read GRDMQDLPENDVNNNENENPDEHEGIA and KEVE…PDDI. Residues 1027–1037 show a composition bias toward pro residues; that stretch reads PSTPKINPPQS. Ser-1037 is subject to Phosphoserine.

It belongs to the TMCO4 family. In terms of assembly, interacts with RPP0. Interacts with APM2.

The protein resides in the golgi apparatus membrane. The protein localises to the early endosome membrane. Its subcellular location is the cytoplasmic vesicle. It localises to the clathrin-coated vesicle membrane. Probable lipase that recruits the AP-1-related (AP-1R) complex to membranes via interaction with APM2. The AP-1R complex is an adapter protein complex that mediates of cargo protein SNC1 sorting in clathrin-coated vesicles. The sequence is that of Probable lipase MIL1 from Saccharomyces cerevisiae (strain ATCC 204508 / S288c) (Baker's yeast).